The primary structure comprises 351 residues: Dihydroorotate dehydrogenase (quinone) (351 aa).

Residues 67 to 71 and T91 contribute to the FMN site; that span reads AGFDK. K71 lines the substrate pocket. Position 116 to 120 (116 to 120) interacts with substrate; the sequence is NAMGF. FMN-binding residues include N145 and N178. N178 contacts substrate. The Nucleophile role is filled by S181. Substrate is bound at residue N183. The FMN site is built by K214 and T242. Position 243 to 244 (243 to 244) interacts with substrate; that stretch reads NT. Residues G262, G291, and 312–313 each bind FMN; that span reads YS.

Belongs to the dihydroorotate dehydrogenase family. Type 2 subfamily. As to quaternary structure, monomer. FMN is required as a cofactor.

It localises to the cell membrane. It carries out the reaction (S)-dihydroorotate + a quinone = orotate + a quinol. The protein operates within pyrimidine metabolism; UMP biosynthesis via de novo pathway; orotate from (S)-dihydroorotate (quinone route): step 1/1. Catalyzes the conversion of dihydroorotate to orotate with quinone as electron acceptor. This is Dihydroorotate dehydrogenase (quinone) from Helicobacter pylori (strain Shi470).